Reading from the N-terminus, the 388-residue chain is G2/mitotic-specific cyclin-B (388 aa).

It belongs to the cyclin family. Cyclin AB subfamily. Interacts with the CDK1 protein kinase to form a serine/threonine kinase holoenzyme complex also known as maturation promoting factor (MPF). The cyclin subunit imparts substrate specificity to the complex.

Its function is as follows. Essential for the control of the cell cycle at the G2/M (mitosis) transition. The protein is G2/mitotic-specific cyclin-B of Marthasterias glacialis (Spiny starfish).